Consider the following 948-residue polypeptide: Phosphoenolpyruvate carboxylase (948 aa).

Active-site residues include His138 and Lys610.

It belongs to the PEPCase type 1 family. It depends on Mg(2+) as a cofactor.

It carries out the reaction oxaloacetate + phosphate = phosphoenolpyruvate + hydrogencarbonate. Functionally, forms oxaloacetate, a four-carbon dicarboxylic acid source for the tricarboxylic acid cycle. The polypeptide is Phosphoenolpyruvate carboxylase (Streptococcus gordonii (strain Challis / ATCC 35105 / BCRC 15272 / CH1 / DL1 / V288)).